Here is a 110-residue protein sequence, read N- to C-terminus: Progonadoliberin-2 (110 aa).

The signal sequence occupies residues 1–26; it reads MASIGQGLVLLLLLLLLTAQPGPLKA. Positions 25–85 are disordered; the sequence is KAQHWSHGWY…KALAPPEDTV (61 aa). At glycine 36 the chain carries Glycine amide.

It belongs to the GnRH family. In terms of tissue distribution, midbrain.

It localises to the secreted. Functionally, stimulates the secretion of gonadotropins; it stimulates the secretion of both luteinizing and follicle-stimulating hormones. The protein is Progonadoliberin-2 (GNRH2) of Suncus murinus (Asian house shrew).